Here is a 297-residue protein sequence, read N- to C-terminus: MDFPYDLNALFPERISVLDSNLSAGRKAHGRPDPLPQVTTVIDELGKASSKAQQLPAPITSAAKLQANRHHLYLLKDGEQNGGRGVIVGFLKVGYKKLFLLDQRGAHLETEPLCVLDFYVTETLQRHGYGSELFDFMLKHKQVEPAQMAYDRPSPKFLSFLEKRYDLRNSVPQVNNFVVFAGFFQSRSAVQLRKVPPRKPEGEIKPYSLMEREVVREEQRVLPWPFVRPGGPPHSPPLLPSSPQSRSLSVGSSPSRAPLRPAAATVLQQGQTPSSPLNDSCRAKRTSSLNRSRLSFH.

One can recognise an N-acetyltransferase domain in the interval 1 to 184; that stretch reads MDFPYDLNAL…NNFVVFAGFF (184 aa). Residues 118–131 and 154–163 each bind acetyl-CoA; these read FYVT…GYGS and SPKFLSFLEK. Positions 226-297 are disordered; it reads FVRPGGPPHS…SLNRSRLSFH (72 aa). The segment covering 230–240 has biased composition (pro residues); sequence GGPPHSPPLLP. Positions 241-264 are enriched in low complexity; it reads SSPQSRSLSVGSSPSRAPLRPAAA. Polar residues-rich tracts occupy residues 266–278 and 286–297; these read VLQQ…SPLN and TSSLNRSRLSFH.

Belongs to the acetyltransferase ATAT1 family. As to quaternary structure, monomer.

It localises to the cytoplasm. The protein resides in the membrane. Its subcellular location is the clathrin-coated pit. The protein localises to the cell junction. It is found in the focal adhesion. It localises to the cell projection. The protein resides in the axon. Its subcellular location is the cytoskeleton. The protein localises to the spindle. The enzyme catalyses L-lysyl-[alpha-tubulin] + acetyl-CoA = N(6)-acetyl-L-lysyl-[alpha-tubulin] + CoA + H(+). Functionally, specifically acetylates 'Lys-40' in alpha-tubulin on the lumenal side of microtubules. Promotes microtubule destabilization and accelerates microtubule dynamics; this activity may be independent of acetylation activity. Acetylates alpha-tubulin with a slow enzymatic rate, due to a catalytic site that is not optimized for acetyl transfer. Enters the microtubule through each end and diffuses quickly throughout the lumen of microtubules. Acetylates only long/old microtubules because of its slow acetylation rate since it does not have time to act on dynamically unstable microtubules before the enzyme is released. May be involved in neuron development. Acetylates alpha-tubulin in neurons, but not in cilia. This Danio rerio (Zebrafish) protein is Alpha-tubulin N-acetyltransferase 1.